Consider the following 79-residue polypeptide: MSTKETVIDLFDRLFMEDVSDMMDEDLFDAGVLDSLGTVELIVEIESIFNIKVPISEFGREDWNTANKIIQGIEELQHA.

Positions 1 to 77 (MSTKETVIDL…KIIQGIEELQ (77 aa)) constitute a Carrier domain. At Ser35 the chain carries O-(pantetheine 4'-phosphoryl)serine.

It belongs to the DltC family. Post-translationally, 4'-phosphopantetheine is transferred from CoA to a specific serine of apo-DCP.

It localises to the cytoplasm. Its pathway is cell wall biogenesis; lipoteichoic acid biosynthesis. Its function is as follows. Carrier protein involved in the D-alanylation of lipoteichoic acid (LTA). The loading of thioester-linked D-alanine onto DltC is catalyzed by D-alanine--D-alanyl carrier protein ligase DltA. The DltC-carried D-alanyl group is further transferred to cell membrane phosphatidylglycerol (PG) by forming an ester bond, probably catalyzed by DltD. D-alanylation of LTA plays an important role in modulating the properties of the cell wall in Gram-positive bacteria, influencing the net charge of the cell wall. This chain is D-alanyl carrier protein, found in Streptococcus equi subsp. equi (strain 4047).